The chain runs to 474 residues: Nucleobindin-1 (474 aa).

The signal sequence occupies residues 1-24; it reads MPPSGPRAALFLLPSLLLLRAVLA. Ser-83 is subject to Phosphoserine. Position 145 is a phosphothreonine (Thr-145). The stretch at 147–215 forms a coiled coil; it reads EARDLELLIQ…QQRRHREHPK (69 aa). Over residues 190-207 the composition is skewed to basic and acidic residues; it reads SLGEEQRKEAERKLEEQQ. Residues 190–218 are disordered; sequence SLGEEQRKEAERKLEEQQRRHREHPKVNV. Residues 225–318 are binds to GNAI2 and GNAI3; that stretch reads LKEVWEELDG…VTLEEFLAST (94 aa). EF-hand domains follow at residues 237–272 and 289–324; these read PNRFNPKTFFILHDINSDGVLDEQELEALFTKELEK and ERLRMREHVMKNVDTNQDRLVTLEEFLASTQRKEFG. Ca(2+) contacts are provided by Asp-250, Asn-252, Asp-254, Glu-261, Asp-302, Asn-304, Asp-306, and Glu-313. The GBA motif lies at 300-330; sequence NVDTNQDRLVTLEEFLASTQRKEFGDTGEGW. Positions 355–422 form a coiled coil; sequence AYTEEELRRF…RKQQQQSHNN (68 aa). Residues 382-474 form a disordered region; sequence LSQETEALGR…EPPQLDSQHL (93 aa). Ser-383 carries the post-translational modification Phosphoserine. The span at 448-460 shows a compositional bias: basic and acidic residues; sequence DQKDVDASEKKVP. Phosphoserine is present on Ser-471.

This sequence belongs to the nucleobindin family. Interacts (via GBA motif) with guanine nucleotide-binding protein G(i) alpha subunits GNAI1, GNAI2 and GNAI3 with higher affinity for GNAI1 and GNAI3 than for GNAI2. Preferentially interacts with inactive rather than active GNAI3. Interaction with GNAI3 is inhibited when NUCB1 binds calcium, probably due to a conformational change which renders the GBA motif inaccessible. As to expression, expressed in bone where it is detected in the soft tissue in the center of the osteon and in the osteocyte lacuna (at protein level).

It is found in the golgi apparatus. The protein resides in the cis-Golgi network membrane. Its subcellular location is the cytoplasm. It localises to the secreted. Functionally, major calcium-binding protein of the Golgi which may have a role in calcium homeostasis. Acts as a non-receptor guanine nucleotide exchange factor which binds to and activates alpha subunits of guanine nucleotide-binding proteins (G proteins). This Bos taurus (Bovine) protein is Nucleobindin-1 (NUCB1).